Here is an 871-residue protein sequence, read N- to C-terminus: DNA mismatch repair protein MutS (871 aa).

618–625 (GPNMSGKS) provides a ligand contact to ATP.

It belongs to the DNA mismatch repair MutS family.

Functionally, this protein is involved in the repair of mismatches in DNA. It is possible that it carries out the mismatch recognition step. This protein has a weak ATPase activity. This Christiangramia forsetii (strain DSM 17595 / CGMCC 1.15422 / KT0803) (Gramella forsetii) protein is DNA mismatch repair protein MutS.